The following is a 916-amino-acid chain: Protein O-GlcNAcase (916 aa).

Residues 1–50 (MVQKESQAALEERESERNANPASVSGASLEPSAAPAPGEDNPSGAGAAAG) are disordered. Residues 60–336 (FLCGVVEGFY…TLATWYKSNM (277 aa)) form the GH84 domain. A protein-binding residues include glycine 67, lysine 98, and aspartate 174. Aspartate 175 acts as the Proton donor in catalysis. Residues tyrosine 219, 278-280 (WDN), aspartate 285, and asparagine 313 contribute to the a protein site. Serine 364 bears the Phosphoserine mark. The segment at 440–480 (QGAALSGEPSALTKEEEKKQPDEEPMDMVVEKQEESEHKSD) is disordered. 2 stretches are compositionally biased toward basic and acidic residues: residues 452-461 (TKEEEKKQPD) and 468-480 (VVEK…HKSD).

This sequence belongs to the glycosyl hydrolase 84 family. Monomer. Interacts with CLOCK. Post-translationally, proteolytically cleaved by caspase-3 during apoptosis. The fragments interact with each other; cleavage does not decrease enzyme activity. In terms of tissue distribution, detected in spleen (at protein level). Ubiquitous. Expressed at highest levels in the brain and spleen.

The protein localises to the nucleus. The protein resides in the cytoplasm. The catalysed reaction is 3-O-(N-acetyl-beta-D-glucosaminyl)-L-seryl-[protein] + H2O = N-acetyl-D-glucosamine + L-seryl-[protein]. The enzyme catalyses 3-O-(N-acetyl-beta-D-glucosaminyl)-L-threonyl-[protein] + H2O = L-threonyl-[protein] + N-acetyl-D-glucosamine. Inhibited by Cu(2+), Hg(2+), Cd(2+) and Zn(2+) at 1 mM. Not inhibited by Co(2+), Mg(2+), Ca(2+), Mn(2+), Fe(3+) and EDTA. Also inhibited by sodium chloride at 1M and 2-amino-2-hydroxymethyl-1,3-propanediol (trishydroxymethylaminomethane) at 75 mM. In terms of biological role, cleaves GlcNAc but not GalNAc from O-glycosylated proteins. Deglycosylates a large and diverse number of proteins, such as CRYAB, ELK1, GSDMD, LMNB1 and TAB1. Can use p-nitrophenyl-beta-GlcNAc and 4-methylumbelliferone-GlcNAc as substrates but not p-nitrophenyl-beta-GalNAc or p-nitrophenyl-alpha-GlcNAc (in vitro). Does not bind acetyl-CoA and does not have histone acetyltransferase activity. Lacks enzyme activity. The polypeptide is Protein O-GlcNAcase (Rattus norvegicus (Rat)).